The chain runs to 179 residues: Large ribosomal subunit protein uL6 (179 aa).

This sequence belongs to the universal ribosomal protein uL6 family. Part of the 50S ribosomal subunit.

In terms of biological role, this protein binds to the 23S rRNA, and is important in its secondary structure. It is located near the subunit interface in the base of the L7/L12 stalk, and near the tRNA binding site of the peptidyltransferase center. This is Large ribosomal subunit protein uL6 from Mycobacterium tuberculosis (strain ATCC 25618 / H37Rv).